Reading from the N-terminus, the 616-residue chain is MTALEKLAKLRSLFHSERVLALTSSKPMVAYLLPSTDAHHSEYLADYDFRVKFLSGFSGSNAYVVVTDREALLWTDGRYFTQAGNQLDSNSWKLMKQGQPDSITVVDWLVRELERGSVIGFDPTLSTFDAGSKTFKRLKAAGLQPVSIPGNLVDEFWTDRPRLAGEPVVVLDVEDTGLTTSKKVENLREKLKQKKCDAAVFTLLDDVMWLLNIRGSDIPYNPLAYSYLFVAMREIHVFIDNEKLDEKSRAHFHKSNVSIHPYGEVYSWISNWLKAKEASKEPHMVYLTPETNYAIGSIIGEENSMVDTSLVQTAKATKNDHEMQGMRNSHLRDSAALVEFLCWLEKELLSGKRYTEIELADKIDHLRSLQDKYVTLSFDTISAVGDHAALPHYKPLGESGNRKAAANQVFLLDSGAHYGDGTTDVTRTVWYTNPPKEFILHNTLVLKGHINLARAKFPDGIYGSRLDTLTRDALWKLGLDFEHGTGHGVGHYLNVHEGPIGIGHRSVPTGGELHASQVLTIEPGFYAKEKYGIRIENCYETVEAVVMSKAQNFLTFKSLTLVPIQTSIVDKSLLIEEEINWLNQYHARVLKEVGEHLQKRGKTDELKWLAEACKPI.

Positions 78 and 392 each coordinate a peptide. Aspartate 413, aspartate 424, and histidine 487 together coordinate Zn(2+). Residues histidine 487, histidine 496, and glutamate 522 each contribute to the a peptide site. Glutamate 522 and glutamate 536 together coordinate Zn(2+).

Belongs to the peptidase M24B family. In terms of assembly, homodimer. May interact with pid-2, pid-4 and pid-5. Zn(2+) serves as cofactor. Specifically expressed in the intestine.

The protein resides in the cytoplasm. The enzyme catalyses Release of any N-terminal amino acid, including proline, that is linked to proline, even from a dipeptide or tripeptide.. With respect to regulation, strongly inhibited by the metal ion chelators EDTA and 1,10-phenanthroline. Also inhibited by apstatin. Activity towards bradykinin is inhibited by Mn(2+) and Zn(2+) at all concentrations tested, whereas Co(2+) is inhibitory at concentrations above 100 uM and activatory at 10 uM. Functionally, catalyzes the removal of a penultimate prolyl residue from the N-termini of peptides, such as Arg-Pro-Pro. Has activity towards the flp-9 neuropeptide KPSFVRF-amide. This Caenorhabditis elegans protein is Xaa-Pro aminopeptidase app-1.